A 660-amino-acid polypeptide reads, in one-letter code: Bifunctional polymyxin resistance protein ArnA (660 aa).

The segment at 1-304 (MKAVIFAYHD…TLGLVAGARL (304 aa)) is formyltransferase ArnAFT. His104 (proton donor; for formyltransferase activity) is an active-site residue. (6R)-10-formyltetrahydrofolate contacts are provided by residues Arg114 and 136–140 (VKRAD). The tract at residues 314–660 (RRIRVLILGV…RSVDIAERAS (347 aa)) is dehydrogenase ArnADH. Residues Asp347 and 368-369 (DI) contribute to the NAD(+) site. Residues Ala393, Tyr398, and 432-433 (TS) each bind UDP-alpha-D-glucuronate. The active-site Proton acceptor; for decarboxylase activity is the Glu434. Residues Arg460, Asn492, 526–535 (KLIDGGQQKR), and Tyr613 each bind UDP-alpha-D-glucuronate. The active-site Proton donor; for decarboxylase activity is the Arg619.

The protein in the N-terminal section; belongs to the Fmt family. UDP-L-Ara4N formyltransferase subfamily. It in the C-terminal section; belongs to the NAD(P)-dependent epimerase/dehydratase family. UDP-glucuronic acid decarboxylase subfamily. As to quaternary structure, homohexamer, formed by a dimer of trimers.

The catalysed reaction is UDP-alpha-D-glucuronate + NAD(+) = UDP-beta-L-threo-pentopyranos-4-ulose + CO2 + NADH. It carries out the reaction UDP-4-amino-4-deoxy-beta-L-arabinose + (6R)-10-formyltetrahydrofolate = UDP-4-deoxy-4-formamido-beta-L-arabinose + (6S)-5,6,7,8-tetrahydrofolate + H(+). It participates in nucleotide-sugar biosynthesis; UDP-4-deoxy-4-formamido-beta-L-arabinose biosynthesis; UDP-4-deoxy-4-formamido-beta-L-arabinose from UDP-alpha-D-glucuronate: step 1/3. The protein operates within nucleotide-sugar biosynthesis; UDP-4-deoxy-4-formamido-beta-L-arabinose biosynthesis; UDP-4-deoxy-4-formamido-beta-L-arabinose from UDP-alpha-D-glucuronate: step 3/3. Its pathway is bacterial outer membrane biogenesis; lipopolysaccharide biosynthesis. In terms of biological role, bifunctional enzyme that catalyzes the oxidative decarboxylation of UDP-glucuronic acid (UDP-GlcUA) to UDP-4-keto-arabinose (UDP-Ara4O) and the addition of a formyl group to UDP-4-amino-4-deoxy-L-arabinose (UDP-L-Ara4N) to form UDP-L-4-formamido-arabinose (UDP-L-Ara4FN). The modified arabinose is attached to lipid A and is required for resistance to polymyxin and cationic antimicrobial peptides. This Salmonella typhimurium (strain LT2 / SGSC1412 / ATCC 700720) protein is Bifunctional polymyxin resistance protein ArnA (arnA).